Consider the following 239-residue polypeptide: Pimeloyl-[acyl-carrier protein] methyl ester esterase (239 aa).

Residues W20, 77–78 (SM), and 138–142 (FISLQ) contribute to the substrate site. S77 serves as the catalytic Nucleophile. Catalysis depends on residues D192 and H220. Residue H220 participates in substrate binding.

The protein belongs to the AB hydrolase superfamily. Carboxylesterase BioH family. In terms of assembly, monomer.

It localises to the cytoplasm. The enzyme catalyses 6-carboxyhexanoyl-[ACP] methyl ester + H2O = 6-carboxyhexanoyl-[ACP] + methanol + H(+). The protein operates within cofactor biosynthesis; biotin biosynthesis. The physiological role of BioH is to remove the methyl group introduced by BioC when the pimeloyl moiety is complete. It allows to synthesize pimeloyl-ACP via the fatty acid synthetic pathway through the hydrolysis of the ester bonds of pimeloyl-ACP esters. The protein is Pimeloyl-[acyl-carrier protein] methyl ester esterase of Legionella pneumophila (strain Lens).